Here is a 550-residue protein sequence, read N- to C-terminus: Hydroxylamine reductase (550 aa).

[2Fe-2S] cluster is bound by residues C3, C6, C18, and C25. H249, E273, C317, C405, C433, C458, E492, and K494 together coordinate hybrid [4Fe-2O-2S] cluster. C405 bears the Cysteine persulfide mark.

The protein belongs to the HCP family. [2Fe-2S] cluster serves as cofactor. Requires hybrid [4Fe-2O-2S] cluster as cofactor.

It localises to the cytoplasm. The enzyme catalyses A + NH4(+) + H2O = hydroxylamine + AH2 + H(+). Its function is as follows. Catalyzes the reduction of hydroxylamine to form NH(3) and H(2)O. This chain is Hydroxylamine reductase, found in Salmonella paratyphi A (strain ATCC 9150 / SARB42).